The following is a 219-amino-acid chain: Uracil-DNA glycosylase (219 aa).

The active-site Proton acceptor is Asp-59.

This sequence belongs to the uracil-DNA glycosylase (UDG) superfamily. UNG family.

It localises to the cytoplasm. The catalysed reaction is Hydrolyzes single-stranded DNA or mismatched double-stranded DNA and polynucleotides, releasing free uracil.. Functionally, excises uracil residues from the DNA which can arise as a result of misincorporation of dUMP residues by DNA polymerase or due to deamination of cytosine. The protein is Uracil-DNA glycosylase of Staphylococcus haemolyticus (strain JCSC1435).